A 540-amino-acid polypeptide reads, in one-letter code: FAD-binding monooxygenase lolF2 (540 aa).

Residues 43 to 46 and 55 to 58 contribute to the FAD site; these read VWRE and DSLF. NADP(+)-binding positions include 53–55, 182–188, and 205–206; these read AVD, TGPSGVQ, and QS.

It belongs to the FAD-binding monooxygenase family. It depends on FAD as a cofactor.

Its pathway is alkaloid biosynthesis. In terms of biological role, FAD-binding monooxygenase; part of the gene cluster that mediates the biosynthesis of loline alkaloids, potent insecticidal agents composed of a pyrrolizidine ring system and an uncommon ether bridge linking carbons 2 and 7. Lolines are structurally differentiated by the various modifications of the L-amino group and include norloline, loline, N-methylloline, N-acetylloline, N-acetylnorloline, and N-formylloline. The first committed step is the condensation of O-acetyl-L-homoserine (derived from L-aspartic acid) and L-proline, probably catalyzed by the gamma-type pyridoxal 5'-phosphate(PLP)-dependent enzyme lolC, to give the diamino diacid, NACPP. Ensuing cyclization, decarboxylation, and acetylation steps yield 1-exo-acetamidopyrrolizidine (AcAP). LolO is required for installation of the ether bridge upon the pathway intermediate, 1-exo-acetamidopyrrolizidine (AcAP). In sequential 2-oxoglutarate- and O(2)-consuming steps, lolO removes hydrogens from C2 and C7 of AcAP to form both carbon-oxygen bonds in N-acetylnorloline (NANL), the precursor to all other lolines. The enzymes lolD, lolE, lolF and lolT have also been proposed to be involved in the ether-bridge installation. Further processing of the exocyclic moiety of NANL by fungal N-acetamidase (LolN), methyltransferase (LolM), and cytochrome P450 (LolP) enzymes, with occasional involvement of a plant acetyltransferase, generates the other known lolines. LolN transforms NANL to norlonine which is monomethylated and dimethylated to respectively lonine and N-methyllonine (NML) by lolM. LolP catalyzes hydroxylation of the methyl group in N-methylloline (NML) and further oxygenation to N-formylloline (NFL). A plant acetyltransferase is responsible for the acetylation of loline to form N-acetylloline (NAL). LolA might interact with aspartate kinase to prevent feedback inhibition of its activity by these end products and thereby promote production of l-homoserine from l-aspartate. The sequence is that of FAD-binding monooxygenase lolF2 from Epichloe uncinata (Endophyte fungus).